The following is a 513-amino-acid chain: ATP synthase subunit alpha 1 (513 aa).

Gly-169–Thr-176 contributes to the ATP binding site.

The protein belongs to the ATPase alpha/beta chains family. As to quaternary structure, F-type ATPases have 2 components, CF(1) - the catalytic core - and CF(0) - the membrane proton channel. CF(1) has five subunits: alpha(3), beta(3), gamma(1), delta(1), epsilon(1). CF(0) has three main subunits: a(1), b(2) and c(9-12). The alpha and beta chains form an alternating ring which encloses part of the gamma chain. CF(1) is attached to CF(0) by a central stalk formed by the gamma and epsilon chains, while a peripheral stalk is formed by the delta and b chains.

Its subcellular location is the cell inner membrane. It carries out the reaction ATP + H2O + 4 H(+)(in) = ADP + phosphate + 5 H(+)(out). Its function is as follows. Produces ATP from ADP in the presence of a proton gradient across the membrane. The alpha chain is a regulatory subunit. This Photobacterium profundum (strain SS9) protein is ATP synthase subunit alpha 1.